Reading from the N-terminus, the 166-residue chain is Protein SprT (166 aa).

Residues 19 to 164 enclose the SprT-like domain; sequence RDALARANLK…CVRCGDTLVA (146 aa). His78 is a binding site for Zn(2+). The active site involves Glu79. His82 provides a ligand contact to Zn(2+).

This sequence belongs to the SprT family. The cofactor is Zn(2+).

It localises to the cytoplasm. The chain is Protein SprT from Cronobacter sakazakii (strain ATCC BAA-894) (Enterobacter sakazakii).